The following is a 105-amino-acid chain: Protein LITTLE ZIPPER 2 (105 aa).

Residues 1–20 (MCLTTSEPPFPDTDTPTMRS) are disordered. A coiled-coil region spans residues 39–60 (NLTRRRRLLKEQKEMEMRNLKL).

In terms of assembly, interacts with REV.

Its function is as follows. Competitive inhibitor of the HD-ZIPIII transcription factors in shoot apical meristem (SAM) development. Acts by forming non-functional heterodimers. Part of a negative feedback loop. Essential for proper functioning of stem cells in the SAM. This chain is Protein LITTLE ZIPPER 2, found in Arabidopsis thaliana (Mouse-ear cress).